Here is a 331-residue protein sequence, read N- to C-terminus: MTTETNPAVTPAYNPSEKQKGAAKTIRIPIKVIPMERLPKPDWIRVKAASPSTRFYEIKDILRANNLVTVCEEASCPNIGECFGKGTATFMIMGDKCTRRCPFCDVGHGRPDPLDVNEPENLAKTIAALRLNYVVITSVDRDDLRDGGAGHFAECIRRVRELSPNTRIEILVPDFRGRMDRALEILNAAPPDVMNHNLETAPRLYKEARPGSDYEYSLNLLKRFKAQHPNTPTKSGIMVGLGETDEEVLQVMRDMRAHDVDMLTIGQYLMPSGDHLPVRRYVHPDTFKMYEEEAYKMGFAHAAVGAMVRSSYHADQQAHGVTSAQSDVVNK.

Positions 1 to 20 are disordered; that stretch reads MTTETNPAVTPAYNPSEKQK. Residues cysteine 71, cysteine 76, cysteine 82, cysteine 97, cysteine 101, cysteine 104, and serine 311 each contribute to the [4Fe-4S] cluster site. Residues 82–300 enclose the Radical SAM core domain; that stretch reads CFGKGTATFM…EEEAYKMGFA (219 aa).

It belongs to the radical SAM superfamily. Lipoyl synthase family. [4Fe-4S] cluster serves as cofactor.

Its subcellular location is the cytoplasm. The enzyme catalyses [[Fe-S] cluster scaffold protein carrying a second [4Fe-4S](2+) cluster] + N(6)-octanoyl-L-lysyl-[protein] + 2 oxidized [2Fe-2S]-[ferredoxin] + 2 S-adenosyl-L-methionine + 4 H(+) = [[Fe-S] cluster scaffold protein] + N(6)-[(R)-dihydrolipoyl]-L-lysyl-[protein] + 4 Fe(3+) + 2 hydrogen sulfide + 2 5'-deoxyadenosine + 2 L-methionine + 2 reduced [2Fe-2S]-[ferredoxin]. Its pathway is protein modification; protein lipoylation via endogenous pathway; protein N(6)-(lipoyl)lysine from octanoyl-[acyl-carrier-protein]: step 2/2. In terms of biological role, catalyzes the radical-mediated insertion of two sulfur atoms into the C-6 and C-8 positions of the octanoyl moiety bound to the lipoyl domains of lipoate-dependent enzymes, thereby converting the octanoylated domains into lipoylated derivatives. The polypeptide is Lipoyl synthase (Janthinobacterium sp. (strain Marseille) (Minibacterium massiliensis)).